A 318-amino-acid chain; its full sequence is Vomeronasal type-1 receptor 45 (318 aa).

At 1 to 32 the chain is on the extracellular side; that stretch reads MSEILFFSPQPLFSHMMNKNSRLHTHSNIKNT. A helical membrane pass occupies residues 33-53; sequence FFSEIGIGILGNSFLLLFHIL. Residues 54–65 lie on the Cytoplasmic side of the membrane; the sequence is KFIRGHRLRLTD. Residues 66-86 traverse the membrane as a helical segment; it reads LPIGLLSLIHLLMLLLMAFIA. Residues 87 to 109 lie on the Extracellular side of the membrane; the sequence is TDIFISRRGWDDIICKFLVYLYR. Cysteine 101 and cysteine 188 are joined by a disulfide. A helical transmembrane segment spans residues 110-130; that stretch reads VLRGLSLCTTSMLSVLQAIIL. Residues 131–150 lie on the Cytoplasmic side of the membrane; it reads SPRSSCLAKLKHKYPHHISC. The chain crosses the membrane as a helical span at residues 151–171; that stretch reads AIIFLSVLYMLISSHILLSII. At 172–206 the chain is on the extracellular side; it reads ATPNLTRNDFLYVTQSCSILPLSYVMQSMYSTLLA. Asparagine 175 carries N-linked (GlcNAc...) asparagine glycosylation. The chain crosses the membrane as a helical span at residues 207 to 227; the sequence is LREVFLISLMVLSTLYMVVLL. Residues 228–254 are Cytoplasmic-facing; the sequence is CRHRKQAQHLQGTSLSPKASAEQRATQ. The helical transmembrane segment at 255 to 275 threads the bilayer; it reads TILMLMTFFVLMSIFDSIVSC. At 276 to 285 the chain is on the extracellular side; sequence SRTMFLDDPT. A helical membrane pass occupies residues 286–306; the sequence is SYSIHIFVMHIYATVSPFVFM. Over 307–318 the chain is Cytoplasmic; sequence STEKHIVNILRG.

Belongs to the G-protein coupled receptor 1 family. In terms of tissue distribution, expressed in a subset of sensory neurons located in the apical layer of the vomeronasal organ.

It localises to the cell membrane. In terms of biological role, putative pheromone receptor implicated in the regulation of social and reproductive behavior. The chain is Vomeronasal type-1 receptor 45 (Vmn1r45) from Mus musculus (Mouse).